Here is a 252-residue protein sequence, read N- to C-terminus: D-aminoacyl-tRNA deacylase (252 aa).

The protein belongs to the DtdA deacylase family. As to quaternary structure, monomer. Requires Zn(2+) as cofactor.

It catalyses the reaction a D-aminoacyl-tRNA + H2O = a tRNA + a D-alpha-amino acid + H(+). The enzyme catalyses glycyl-tRNA(Ala) + H2O = tRNA(Ala) + glycine + H(+). Its function is as follows. D-aminoacyl-tRNA deacylase with broad substrate specificity. By recycling D-aminoacyl-tRNA to D-amino acids and free tRNA molecules, this enzyme counteracts the toxicity associated with the formation of D-aminoacyl-tRNA entities in vivo. The sequence is that of D-aminoacyl-tRNA deacylase from Pyrobaculum neutrophilum (strain DSM 2338 / JCM 9278 / NBRC 100436 / V24Sta) (Thermoproteus neutrophilus).